We begin with the raw amino-acid sequence, 585 residues long: Proline--tRNA ligase (585 aa).

This sequence belongs to the class-II aminoacyl-tRNA synthetase family. ProS type 1 subfamily. Homodimer.

It localises to the cytoplasm. The enzyme catalyses tRNA(Pro) + L-proline + ATP = L-prolyl-tRNA(Pro) + AMP + diphosphate. Its function is as follows. Catalyzes the attachment of proline to tRNA(Pro) in a two-step reaction: proline is first activated by ATP to form Pro-AMP and then transferred to the acceptor end of tRNA(Pro). As ProRS can inadvertently accommodate and process non-cognate amino acids such as alanine and cysteine, to avoid such errors it has two additional distinct editing activities against alanine. One activity is designated as 'pretransfer' editing and involves the tRNA(Pro)-independent hydrolysis of activated Ala-AMP. The other activity is designated 'posttransfer' editing and involves deacylation of mischarged Ala-tRNA(Pro). The misacylated Cys-tRNA(Pro) is not edited by ProRS. This is Proline--tRNA ligase from Corynebacterium diphtheriae (strain ATCC 700971 / NCTC 13129 / Biotype gravis).